The sequence spans 502 residues: Tyrosine-protein kinase receptor old-1 (502 aa).

The first 19 residues, 1–19 (MKGTLIFVVFYSSYGFAHC), serve as a signal peptide directing secretion. Over 20–58 (NTILRSSSLSRNFEDSLRRIPRSTDKDETGFEDSNVQEV) the chain is Extracellular. Residues 59–79 (IFILLYCLFVALAILICGLII) traverse the membrane as a helical segment. The Cytoplasmic portion of the chain corresponds to 80-502 (FYNSRKRELR…WLSDEKHCDS (423 aa)). A disordered region spans residues 99 to 140 (LLEPTSADHKRRNSSNIVPPEPTPYPITSGESDLRQTPSRLS). Residues 127 to 140 (SGESDLRQTPSRLS) are compositionally biased toward polar residues. A Protein kinase domain is found at 175–473 (ISKGRPLGSG…ELKTTSNEYF (299 aa)). ATP contacts are provided by residues 181–189 (LGSGEFGII) and K213. The Proton acceptor role is filled by D321.

The protein belongs to the protein kinase superfamily. Tyr protein kinase family.

It is found in the cell membrane. The catalysed reaction is L-tyrosyl-[protein] + ATP = O-phospho-L-tyrosyl-[protein] + ADP + H(+). Receptor tyrosine kinase which plays a role in promoting longevity and resistance to stresses including UV irradiation and high temperatures, probably downstream of daf-16. In Caenorhabditis elegans, this protein is Tyrosine-protein kinase receptor old-1.